We begin with the raw amino-acid sequence, 229 residues long: Putative N-acetylmannosamine-6-phosphate 2-epimerase (229 aa).

This sequence belongs to the NanE family.

It catalyses the reaction an N-acyl-D-glucosamine 6-phosphate = an N-acyl-D-mannosamine 6-phosphate. Its pathway is amino-sugar metabolism; N-acetylneuraminate degradation; D-fructose 6-phosphate from N-acetylneuraminate: step 3/5. Functionally, converts N-acetylmannosamine-6-phosphate (ManNAc-6-P) to N-acetylglucosamine-6-phosphate (GlcNAc-6-P). In Escherichia coli O8 (strain IAI1), this protein is Putative N-acetylmannosamine-6-phosphate 2-epimerase.